The sequence spans 565 residues: Augmin complex subunit dgt3 (565 aa).

Coiled coils occupy residues 135–171 and 212–241; these read ELQL…AKKA and QDYD…IQFY.

It belongs to the HAUS3 family. In terms of assembly, component of the augmin complex composed of dgt2, dgt3, dgt4, dgt5, dgt6, msd1, msd5 and wac. The complex interacts directly or indirectly with microtubules and is required for centrosome-independent generation of spindle microtubules.

Its subcellular location is the cytoplasm. It is found in the cytoskeleton. The protein localises to the spindle. As part of the augmin complex, plays a role in centrosome-independent generation of spindle microtubules. The complex is required for mitotic spindle assembly through its involvement in localizing gamma-tubulin to spindle microtubules. The sequence is that of Augmin complex subunit dgt3 from Drosophila melanogaster (Fruit fly).